Here is a 122-residue protein sequence, read N- to C-terminus: Selenoprotein H (122 aa).

Lys20 is subject to N6-acetyllysine. The cysteinyl-selenocysteine (Cys-Sec); redox-active cross-link spans 41-44 (CTSU). Position 44 (Sec44) is a non-standard amino acid, selenocysteine.

This sequence belongs to the SelWTH family.

Its function is as follows. May be involved in a redox-related process. In Homo sapiens (Human), this protein is Selenoprotein H.